The primary structure comprises 101 residues: HssA/B-like protein 40 (101 aa).

Positions 1-26 (MTLFSSISSMSTSMSGSKSSISSFGS) are disordered.

It belongs to the hssA/B family.

This chain is HssA/B-like protein 40 (hssl40), found in Dictyostelium discoideum (Social amoeba).